The following is a 340-amino-acid chain: Cobalt-precorrin-5B C(1)-methyltransferase (340 aa).

The protein belongs to the CbiD family.

It carries out the reaction Co-precorrin-5B + S-adenosyl-L-methionine = Co-precorrin-6A + S-adenosyl-L-homocysteine. It functions in the pathway cofactor biosynthesis; adenosylcobalamin biosynthesis; cob(II)yrinate a,c-diamide from sirohydrochlorin (anaerobic route): step 6/10. In terms of biological role, catalyzes the methylation of C-1 in cobalt-precorrin-5B to form cobalt-precorrin-6A. This Methanococcoides burtonii (strain DSM 6242 / NBRC 107633 / OCM 468 / ACE-M) protein is Cobalt-precorrin-5B C(1)-methyltransferase.